Reading from the N-terminus, the 89-residue chain is Small ribosomal subunit protein uS15 (89 aa).

This sequence belongs to the universal ribosomal protein uS15 family. As to quaternary structure, part of the 30S ribosomal subunit. Forms a bridge to the 50S subunit in the 70S ribosome, contacting the 23S rRNA.

Functionally, one of the primary rRNA binding proteins, it binds directly to 16S rRNA where it helps nucleate assembly of the platform of the 30S subunit by binding and bridging several RNA helices of the 16S rRNA. Its function is as follows. Forms an intersubunit bridge (bridge B4) with the 23S rRNA of the 50S subunit in the ribosome. The protein is Small ribosomal subunit protein uS15 of Bartonella quintana (strain Toulouse) (Rochalimaea quintana).